A 520-amino-acid chain; its full sequence is Peptide chain release factor 3 (520 aa).

Residues 8 to 277 form the tr-type G domain; sequence ESRKTFAIIS…FAPMPNARQT (270 aa). GTP is bound by residues 17 to 24, 85 to 89, and 139 to 142; these read SHPDAGKT, DTPGH, and NKLD.

The protein belongs to the TRAFAC class translation factor GTPase superfamily. Classic translation factor GTPase family. PrfC subfamily.

The protein localises to the cytoplasm. In terms of biological role, increases the formation of ribosomal termination complexes and stimulates activities of RF-1 and RF-2. It binds guanine nucleotides and has strong preference for UGA stop codons. It may interact directly with the ribosome. The stimulation of RF-1 and RF-2 is significantly reduced by GTP and GDP, but not by GMP. The sequence is that of Peptide chain release factor 3 from Staphylococcus aureus (strain JH1).